The sequence spans 132 residues: Small ribosomal subunit protein uS8 (132 aa).

It belongs to the universal ribosomal protein uS8 family. As to quaternary structure, part of the 30S ribosomal subunit. Contacts proteins S5 and S12.

Its function is as follows. One of the primary rRNA binding proteins, it binds directly to 16S rRNA central domain where it helps coordinate assembly of the platform of the 30S subunit. The sequence is that of Small ribosomal subunit protein uS8 from Allorhizobium ampelinum (strain ATCC BAA-846 / DSM 112012 / S4) (Agrobacterium vitis (strain S4)).